We begin with the raw amino-acid sequence, 547 residues long: Oncoprotein-induced transcript 3 protein (547 aa).

A signal peptide spans 1 to 19; sequence MPQLLLLACLLIIVTRVAP. N-linked (GlcNAc...) asparagine glycosylation is found at asparagine 89 and asparagine 116. Residues 182–222 form the EGF-like; calcium-binding domain; the sequence is DENECEQNNGGCSEICVNLKNSYRCECGIGRVLRSDGKTCE. 3 disulfide bridges follow: cysteine 186-cysteine 197, cysteine 193-cysteine 206, and cysteine 208-cysteine 221. Positions 267 to 516 constitute a ZP domain; that stretch reads FCKSNTIEVS…SRCAQGCHRR (250 aa). Asparagine 299 carries N-linked (GlcNAc...) asparagine glycosylation. The disordered stretch occupies residues 520–547; the sequence is EASTEGEDASGPRSQMLTGGPISIDWED.

It localises to the nucleus envelope. May be involved in hepatocellular function and development. This chain is Oncoprotein-induced transcript 3 protein (OIT3), found in Bos taurus (Bovine).